Consider the following 709-residue polypeptide: Caprin-1 (709 aa).

Low complexity-rich tracts occupy residues Met-1–Ser-15 and Gly-22–Ala-43. Residues Met-1–Gln-50 form a disordered region. The residue at position 2 (Pro-2) is an N-acetylproline. Pro-2 carries the N-acetylalanine modification. Ser-10 carries the phosphoserine modification. A coiled-coil region spans residues Val-60–Asp-94. Ser-115 bears the Phosphoserine mark. Positions Lys-125 to Gln-153 form a coiled coil. An Omega-N-methylarginine modification is found at Arg-165. The tract at residues Glu-260–Ser-291 is disordered. A compositionally biased stretch (acidic residues) spans Gln-271 to Ser-291. Phosphoserine occurs at positions 335 and 343. The tract at residues Gln-360–Glu-381 is G3BP1-binding. Disordered stretches follow at residues Leu-417–Gln-446, Thr-475–Lys-499, and Ala-524–Asn-709. Residues Pro-433–Gln-446 are compositionally biased toward polar residues. 2 stretches are compositionally biased toward low complexity: residues Gln-477–Gln-491 and Gln-537–Val-570. Polar residues predominate over residues Pro-577–Tyr-605. A Phosphotyrosine; by EPHA4 modification is found at Tyr-625. Omega-N-methylarginine occurs at positions 626 and 633. Residues Tyr-636 and Tyr-639 each carry the phosphotyrosine; by EPHA4 modification. At Arg-640 the chain carries Omega-N-methylarginine. Residues Ser-642–Ser-657 are compositionally biased toward polar residues. O-linked (GlcNAc) serine glycans are attached at residues Ser-644 and Ser-649. Phosphotyrosine; by EPHA4 occurs at positions 651, 662, 665, and 670. Composition is skewed to low complexity over residues Arg-676–Ala-686 and Asn-697–Asn-709. Arg-698 is modified (asymmetric dimethylarginine; alternate). Arg-698 is subject to Omega-N-methylarginine; alternate.

The protein belongs to the caprin family. In terms of assembly, may form homomultimers. Interacts with G3BP1; interaction is direct and promotes stress granule formation. Interacts with G3BP2; interaction is direct and promotes stress granule formation. Interacts with PQBP1. Interacts with DDX3X. Interacts (when phosphorylated by EPHA4) with FMR1; interaction with FMR1 promotes formation of a membraneless compartment. (Microbial infection) Interacts with Zika virus capsid protein C; this interaction is probably linked to the inhibition of stress granules formation by the virus. As to quaternary structure, (Microbial infection) Interacts with rotavirus A non-structural protein 5; this interaction probably plays a role in the sequestration of CAPRIN1 in viral factories. In terms of assembly, (Microbial infection) Interacts with Japanese encephalitis virus capsid protein C; this interaction is involved in the suppression of the integrated stress response by the virus. Post-translationally, tyrosine phosphorylation by EPHA4 promotes interaction with FMR1 and liquid-liquid phase separation (LLPS) for the formation of a membraneless compartment that concentrates mRNAs with associated regulatory factors. In terms of processing, O-glycosylated (O-GlcNAcylated), in a cell cycle-dependent manner. O-glycosylation by OGT inhibit ability to undergo liquid-liquid phase separation (LLPS). As to expression, ubiquitous.

Its subcellular location is the cytoplasm. It is found in the cytoplasmic ribonucleoprotein granule. It localises to the cytosol. The protein localises to the cell projection. The protein resides in the dendrite. Its subcellular location is the lamellipodium. With respect to regulation, ability to mediate liquid-liquid phase separation is regulated by ATP: moderate concentrations of ATP enhance phase separation, whereas high concentrations of ATP lead to inhibition of phase separation. Functionally, mRNA-binding protein that acts as a regulator of mRNAs transport, translation and/or stability, and which is involved in neurogenesis, synaptic plasticity in neurons and cell proliferation and migration in multiple cell types. Plays an essential role in cytoplasmic stress granule formation. Acts as an mRNA regulator by mediating formation of some phase-separated membraneless compartment: undergoes liquid-liquid phase separation upon binding to target mRNAs, leading to assemble mRNAs into cytoplasmic ribonucleoprotein granules that concentrate mRNAs with associated regulatory factors. Undergoes liquid-liquid phase separation following phosphorylation and interaction with FMR1, promoting formation of cytoplasmic ribonucleoprotein granules that concentrate mRNAs with factors that inhibit translation and mediate deadenylation of target mRNAs. In these cytoplasmic ribonucleoprotein granules, CAPRIN1 mediates recruitment of CNOT7 deadenylase, leading to mRNA deadenylation and degradation. Binds directly and selectively to MYC and CCND2 mRNAs. In neuronal cells, directly binds to several mRNAs associated with RNA granules, including BDNF, CAMK2A, CREB1, MAP2, NTRK2 mRNAs, as well as to GRIN1 and KPNB1 mRNAs, but not to rRNAs. This is Caprin-1 from Homo sapiens (Human).